The sequence spans 286 residues: Diaminopimelate epimerase (286 aa).

Asn12 and Asn67 together coordinate substrate. Residue Cys76 is the Proton donor of the active site. Residues 77-78 (GN), Asn165, Asn198, and 216-217 (ER) contribute to the substrate site. Catalysis depends on Cys225, which acts as the Proton acceptor. 226–227 (GT) contacts substrate.

It belongs to the diaminopimelate epimerase family. Homodimer.

It localises to the cytoplasm. It catalyses the reaction (2S,6S)-2,6-diaminopimelate = meso-2,6-diaminopimelate. Its pathway is amino-acid biosynthesis; L-lysine biosynthesis via DAP pathway; DL-2,6-diaminopimelate from LL-2,6-diaminopimelate: step 1/1. In terms of biological role, catalyzes the stereoinversion of LL-2,6-diaminopimelate (L,L-DAP) to meso-diaminopimelate (meso-DAP), a precursor of L-lysine. The chain is Diaminopimelate epimerase from Methanothermobacter thermautotrophicus (strain ATCC 29096 / DSM 1053 / JCM 10044 / NBRC 100330 / Delta H) (Methanobacterium thermoautotrophicum).